Here is a 432-residue protein sequence, read N- to C-terminus: Phosphoprotein associated with glycosphingolipid-enriched microdomains 1 (432 aa).

Residues 1-16 (MGPAGSLLGSGQMQIT) lie on the Extracellular side of the membrane. Residues 17 to 37 (LWGSLAAVAIFFVITFLIFLC) form a helical; Signal-anchor for type III membrane protein membrane-spanning segment. S-palmitoyl cysteine attachment occurs at residues cysteine 37 and cysteine 40. Residues 38–432 (SSCDREKKPR…LQQGRDITRL (395 aa)) are Cytoplasmic-facing. Residues serine 50 and serine 61 each carry the phosphoserine modification. A Phosphotyrosine; by LYN modification is found at tyrosine 105. Over residues 110-122 (TSASDLLDSQDST) the composition is skewed to polar residues. The tract at residues 110–137 (TSASDLLDSQDSTGKPKCHQSRELPRIP) is disordered. 3 positions are modified to phosphotyrosine: tyrosine 163, tyrosine 181, and tyrosine 227. Disordered regions lie at residues 197-230 (EKGH…YASV) and 244-432 (SILG…ITRL). Residues 220–230 (GKAEFAEYASV) are compositionally biased toward basic and acidic residues. Serine 229 bears the Phosphoserine mark. Residues 316–356 (MYSSVNKPGQLVNKSGQSLTVPESTYTSIQGDPQRSPSSCN) are compositionally biased toward polar residues. Phosphotyrosine; by FYN and LYN is present on tyrosine 317. The segment at 317–320 (YSSV) is interaction with CSK. A Phosphoserine modification is found at serine 354. Residue tyrosine 359 is modified to Phosphotyrosine. Serine 380 carries the post-translational modification Phosphoserine. Tyrosine 387 and tyrosine 417 each carry phosphotyrosine. The interaction with NHERF1 stretch occupies residues 430-432 (TRL).

In terms of assembly, interacts with FYN. When phosphorylated, interacts with CSK. Interacts with NHERF1/EBP50. In resting T-cells, part of a PAG1-NHERF1-MSN complex which is disrupted upon TCR activation. Interacts with LYN on plasma membrane lipid rafts. Identified in a complex with LYN and STAT3. Post-translationally, palmitoylated. Phosphorylated by FYN on Tyr-317 in resting T-cells; which promotes interaction with CSK. Dephosphorylated by PTPRC/CD45 upon TCR activation; which leads to CSK dissociation. May also be dephosphorylated by PTPN11. Hyperphosphorylated in mast cells upon FCER1 activation. Phosphorylated by LYN. As to expression, ubiquitously expressed. Present in germinal center B-cells, plasma cells, T-cells, monocytes and platelets (at protein level).

It is found in the cell membrane. In terms of biological role, negatively regulates TCR (T-cell antigen receptor)-mediated signaling in T-cells and FCER1 (high affinity immunoglobulin epsilon receptor)-mediated signaling in mast cells. Promotes CSK activation and recruitment to lipid rafts, which results in LCK inhibition. Inhibits immunological synapse formation by preventing dynamic arrangement of lipid raft proteins. May be involved in cell adhesion signaling. The polypeptide is Phosphoprotein associated with glycosphingolipid-enriched microdomains 1 (PAG1) (Homo sapiens (Human)).